A 196-amino-acid chain; its full sequence is Cell division protein SepF (196 aa).

Residues 15–80 (VEDDEEFNEP…PKRSASTFSK (66 aa)) form a disordered region. Residues 57-72 (PAQTTPKPQTQTAAPK) are compositionally biased toward low complexity.

It belongs to the SepF family. Homodimer. Interacts with FtsZ.

The protein resides in the cytoplasm. Cell division protein that is part of the divisome complex and is recruited early to the Z-ring. Probably stimulates Z-ring formation, perhaps through the cross-linking of FtsZ protofilaments. Its function overlaps with FtsA. This is Cell division protein SepF from Lactococcus lactis subsp. cremoris (strain MG1363).